We begin with the raw amino-acid sequence, 93 residues long: Small ribosomal subunit protein uS19 (93 aa).

The protein belongs to the universal ribosomal protein uS19 family.

In terms of biological role, protein S19 forms a complex with S13 that binds strongly to the 16S ribosomal RNA. The sequence is that of Small ribosomal subunit protein uS19 from Maridesulfovibrio salexigens (strain ATCC 14822 / DSM 2638 / NCIMB 8403 / VKM B-1763) (Desulfovibrio salexigens).